We begin with the raw amino-acid sequence, 775 residues long: Serine/threonine-protein kinase ppk6 (775 aa).

Phosphoserine is present on residues S132 and S134. A Protein kinase domain is found at 503-758 (YTTIKELGIG…IEETLQHHWF (256 aa)). Residues 509-517 (LGIGAYGQV) and K533 contribute to the ATP site. The Proton acceptor role is filled by D636.

Belongs to the protein kinase superfamily. Ser/Thr protein kinase family.

Its subcellular location is the cytoplasm. The protein localises to the nucleus. It carries out the reaction L-seryl-[protein] + ATP = O-phospho-L-seryl-[protein] + ADP + H(+). It catalyses the reaction L-threonyl-[protein] + ATP = O-phospho-L-threonyl-[protein] + ADP + H(+). The sequence is that of Serine/threonine-protein kinase ppk6 (ppk6) from Schizosaccharomyces pombe (strain 972 / ATCC 24843) (Fission yeast).